Here is a 453-residue protein sequence, read N- to C-terminus: tRNA modification GTPase MnmE (453 aa).

Residues arginine 22, glutamate 79, and lysine 119 each coordinate (6S)-5-formyl-5,6,7,8-tetrahydrofolate. Residues 215–376 (GMKVVIAGRP…LRNHLKECMG (162 aa)) form the TrmE-type G domain. Asparagine 225 provides a ligand contact to K(+). GTP contacts are provided by residues 225–230 (NAGKSS), 244–250 (TDIAGTT), 269–272 (DTAG), and 334–337 (NKAD). Residue serine 229 participates in Mg(2+) binding. Residues threonine 244, isoleucine 246, and threonine 249 each contribute to the K(+) site. Threonine 250 is a binding site for Mg(2+). Residue lysine 453 participates in (6S)-5-formyl-5,6,7,8-tetrahydrofolate binding.

Belongs to the TRAFAC class TrmE-Era-EngA-EngB-Septin-like GTPase superfamily. TrmE GTPase family. As to quaternary structure, homodimer. Heterotetramer of two MnmE and two MnmG subunits. It depends on K(+) as a cofactor.

It is found in the cytoplasm. Its function is as follows. Exhibits a very high intrinsic GTPase hydrolysis rate. Involved in the addition of a carboxymethylaminomethyl (cmnm) group at the wobble position (U34) of certain tRNAs, forming tRNA-cmnm(5)s(2)U34. This chain is tRNA modification GTPase MnmE, found in Vibrio vulnificus (strain YJ016).